Consider the following 163-residue polypeptide: Phosphopantetheine adenylyltransferase (163 aa).

Threonine 9 contacts substrate. Residues 9–10 (TF) and histidine 17 contribute to the ATP site. Substrate is bound by residues lysine 41, threonine 73, and arginine 87. ATP-binding positions include 88–90 (GLR), glutamate 98, and 123–129 (FSFISSS).

This sequence belongs to the bacterial CoaD family. In terms of assembly, homohexamer. Mg(2+) serves as cofactor.

The protein localises to the cytoplasm. The catalysed reaction is (R)-4'-phosphopantetheine + ATP + H(+) = 3'-dephospho-CoA + diphosphate. The protein operates within cofactor biosynthesis; coenzyme A biosynthesis; CoA from (R)-pantothenate: step 4/5. Its function is as follows. Reversibly transfers an adenylyl group from ATP to 4'-phosphopantetheine, yielding dephospho-CoA (dPCoA) and pyrophosphate. The polypeptide is Phosphopantetheine adenylyltransferase (Desulfitobacterium hafniense (strain DSM 10664 / DCB-2)).